The chain runs to 496 residues: tRNA modification GTPase mss1, mitochondrial (496 aa).

The transit peptide at 1-19 (MRILNRVFLNTFQACFRRF) directs the protein to the mitochondrion. Residues 239-416 (GINVAILGPS…FLQALSSTFE (178 aa)) form the TrmE-type G domain. Residues 246–253 (GPSNAGKS), 293–297 (DTAGL), and 363–366 (NKVD) contribute to the GTP site.

It belongs to the TRAFAC class TrmE-Era-EngA-EngB-Septin-like GTPase superfamily. TrmE GTPase family.

It localises to the mitochondrion. Its function is as follows. GTPase involved in the 5-carboxymethylaminomethyl modification (mnm(5)s(2)U34) of the wobble uridine base in mitochondrial tRNAs. This Schizosaccharomyces pombe (strain 972 / ATCC 24843) (Fission yeast) protein is tRNA modification GTPase mss1, mitochondrial (mss1).